The following is a 113-amino-acid chain: Antimicrobial peptide microplusin (113 aa).

Positions 1 to 19 (MKSLLVLALLAFGAVLVSA) are cleaved as a signal peptide. Disulfide bonds link Cys-25–Cys-71, Cys-38–Cys-99, and Cys-60–Cys-65.

It localises to the secreted. Has bacteriostatic activity against Gram-positive bacteria, but not against Gram-negative bacteria. Has fungistatic activity against some but not all fungi. Binds and sequesters copper and iron ions. Copper-chelating activity is crucial for antimicrobial activity against M.luteus. The polypeptide is Antimicrobial peptide microplusin (Argas monolakensis (Mono lake bird tick)).